The sequence spans 374 residues: Tomoregulin-2 (374 aa).

An N-terminal signal peptide occupies residues methionine 1–alanine 40. Residues phenylalanine 41–valine 320 lie on the Extracellular side of the membrane. 2 Kazal-like domains span residues valine 90 to threonine 137 and valine 181 to aspartate 229. Intrachain disulfides connect cysteine 91–cysteine 121, cysteine 95–cysteine 114, cysteine 103–cysteine 135, cysteine 182–cysteine 213, cysteine 186–cysteine 206, and cysteine 195–cysteine 227. An N-linked (GlcNAc...) (complex) asparagine; atypical glycan is attached at asparagine 204. Asparagine 230 carries N-linked (GlcNAc...) asparagine glycosylation. Residues histidine 261–glutamate 301 enclose the EGF-like domain. Disulfide bonds link cysteine 265–cysteine 278, cysteine 273–cysteine 289, and cysteine 291–cysteine 300. The interval lysine 303–valine 320 is required for shedding. Residues leucine 321 to isoleucine 341 traverse the membrane as a helical segment. Over threonine 342–isoleucine 374 the chain is Cytoplasmic. The tract at residues arginine 353 to isoleucine 374 is disordered. Positions glutamine 356–isoleucine 374 are enriched in polar residues.

The protein belongs to the tomoregulin family. Post-translationally, O-glycosylated; contains chondroitin sulfate glycosaminoglycans. In terms of processing, a soluble form (TMEFF2-ECD) is produced by proteolytic shedding. This shedding can be induced by phorbol ester or pro-inflammatory cytokines such as TNFalpha, and is mediated by ADAM17. Highly expressed in adult and fetal brain, spinal cord and prostate. Expressed in all brain regions except the pituitary gland, with highest levels in amygdala and corpus callosum. Expressed in the pericryptal myofibroblasts and other stromal cells of normal colonic mucosa. Expressed in prostate carcinoma. Down-regulated in colorectal cancer. Present in Alzheimer disease plaques (at protein level). Isoform 3 is expressed weakly in testis and at high levels in normal and cancerous prostate.

The protein localises to the membrane. Its subcellular location is the secreted. Functionally, may be a survival factor for hippocampal and mesencephalic neurons. The shedded form up-regulates cancer cell proliferation, probably by promoting ERK1/2 phosphorylation. This is Tomoregulin-2 (TMEFF2) from Homo sapiens (Human).